Reading from the N-terminus, the 388-residue chain is Serine/threonine-protein phosphatase sitA (388 aa).

2 residues coordinate Mn(2+): Asp-67 and His-69. The disordered stretch occupies residues 86-146 (PDGSEAEAPK…SQRDRSSSSG (61 aa)). The Mn(2+) site is built by Asp-161 and Asn-193. Catalysis depends on His-194, which acts as the Proton donor. His-243 and His-317 together coordinate Mn(2+).

This sequence belongs to the PPP phosphatase family. PP-6 (PP-V) subfamily. Requires Mn(2+) as cofactor.

The catalysed reaction is O-phospho-L-threonyl-[protein] + H2O = L-threonyl-[protein] + phosphate. In terms of biological role, protein phosphatase that acts as a modulator of pkcA/mpkA activity involved in the cell wall integrity pathway. Plays an important role in regulation of adhesion, cell wall integrity, biofilm formation, and virulence. The chain is Serine/threonine-protein phosphatase sitA from Aspergillus fumigatus (strain ATCC MYA-4609 / CBS 101355 / FGSC A1100 / Af293) (Neosartorya fumigata).